A 43-amino-acid chain; its full sequence is uncharacterized protein (43 aa).

This is an uncharacterized protein from Dictyostelium discoideum (Social amoeba).